The following is a 367-amino-acid chain: Inositol-3-phosphate synthase (367 aa).

Position 2 is an N-acetylserine (Ser2). An Isoglutamyl lysine isopeptide (Lys-Gln) (interchain with Q-Cter in protein Pup) cross-link involves residue Lys73. NAD(+)-binding residues include Asp78, Ala137, Tyr157, Ser200, Asp235, and Lys248.

The protein belongs to the myo-inositol 1-phosphate synthase family. NAD(+) serves as cofactor. Post-translationally, pupylated at Lys-73 by the prokaryotic ubiquitin-like protein Pup, which leads to its degradation by the proteasome.

It catalyses the reaction D-glucose 6-phosphate = 1D-myo-inositol 3-phosphate. Its function is as follows. Key enzyme in myo-inositol biosynthesis pathway that catalyzes the conversion of glucose 6-phosphate to 1D-myo-inositol 3-phosphate in a NAD-dependent manner. This chain is Inositol-3-phosphate synthase (ino1), found in Mycobacterium tuberculosis (strain ATCC 25618 / H37Rv).